Reading from the N-terminus, the 306-residue chain is MTDSKYDYSDITPVDINTEEPQICQILYDEDYKQIMGLLLALMKAEEYSERALHITELGINELASHYTIWIYRFNILKNLPNRNLYDELDWCEEIALDNEKNYQIWNYRQLIIGQIMELNNNDFDPYREFPILEAMLSSDPKNHHVWSYRKWLVDTFDLHNDAKELSFVDKVIDTDLKNNSAWSHRFFLLFSKKHLATDNTIDEELNYVKDKIVKCPQNPSTWNYLLGIHERFDRSITQLEEFSLQFVDLEKDQVTSSFALETLAKIYTQQKKYNESRTVYDLLKSKYDPIRSNFWDYQISKLTSV.

5 PFTA repeats span residues 48-82 (YSERALHITELGINELASHYTIWIYRFNILKNLPN), 84-118 (NLYDELDWCEEIALDNEKNYQIWNYRQLIIGQIME), 125-159 (DPYREFPILEAMLSSDPKNHHVWSYRKWLVDTFDL), 161-195 (NDAKELSFVDKVIDTDLKNNSAWSHRFFLLFSKKH), and 201-235 (TIDEELNYVKDKIVKCPQNPSTWNYLLGIHERFDR).

The protein belongs to the protein prenyltransferase subunit alpha family. Heterodimer of an alpha and a beta subunit. It depends on Mg(2+) as a cofactor.

It carries out the reaction L-cysteinyl-[protein] + (2E,6E)-farnesyl diphosphate = S-(2E,6E)-farnesyl-L-cysteinyl-[protein] + diphosphate. It catalyses the reaction geranylgeranyl diphosphate + L-cysteinyl-[protein] = S-geranylgeranyl-L-cysteinyl-[protein] + diphosphate. Essential subunit of both the farnesyltransferase and the geranylgeranyltransferase complex. Contributes to the transfer of a farnesyl or geranylgeranyl moiety from farnesyl or geranylgeranyl diphosphate to a cysteine at the fourth position from the C-terminus of several proteins having the C-terminal sequence Cys-aliphatic-aliphatic-X. This chain is Protein farnesyltransferase/geranylgeranyltransferase type-1 subunit alpha (RAM2), found in Candida albicans (Yeast).